The following is a 284-amino-acid chain: Quinate/shikimate dehydrogenase (NAD(+)) (284 aa).

2 residues coordinate shikimate: Ser-18 and Thr-70. L-quinate-binding positions include 18 to 20 (SRT) and Thr-70. Tyr-73 serves as the catalytic Proton acceptor. Residues Lys-74, Asn-95, and Asp-111 each contribute to the shikimate site. L-quinate-binding residues include Lys-74, Asn-95, and Asp-111. Residues 137–138 (GG), Asp-159, Arg-164, 203–206 (TPMG), Ala-214, Val-229, and Gly-252 contribute to the NAD(+) site. Gln-259 lines the shikimate pocket. Gln-259 is an L-quinate binding site.

Belongs to the shikimate dehydrogenase family. Homodimer.

It carries out the reaction L-quinate + NAD(+) = 3-dehydroquinate + NADH + H(+). It catalyses the reaction shikimate + NAD(+) = 3-dehydroshikimate + NADH + H(+). The protein operates within metabolic intermediate biosynthesis; chorismate biosynthesis; chorismate from D-erythrose 4-phosphate and phosphoenolpyruvate: step 4/7. It functions in the pathway aromatic compound metabolism; 3,4-dihydroxybenzoate biosynthesis; 3-dehydroquinate from D-quinate (NAD(+) route). Functionally, involved in the biosynthesis of the chorismate, which leads to the biosynthesis of aromatic amino acids, and plays a key role in the quinate degradation pathway. Catalyzes the NAD(+)-dependent oxidation of both quinate and shikimate to 3-dehydroquinate and 3-dehydroshikimate, respectively. It can only use NAD. The sequence is that of Quinate/shikimate dehydrogenase (NAD(+)) from Corynebacterium efficiens (strain DSM 44549 / YS-314 / AJ 12310 / JCM 11189 / NBRC 100395).